The primary structure comprises 356 residues: Ion-translocating oxidoreductase complex subunit D (356 aa).

The next 4 helical transmembrane spans lie at 20–40 (LMLLVVYATIPGMFTMTWFFG), 42–62 (GVLVNVLLASISCMLFEALAI), 68–88 (PVGFYLRDFSALVTGVLIGVS), and 117–137 (GFNPFNPAMVAYALLLVSFPV). The residue at position 177 (Thr-177) is an FMN phosphoryl threonine. The next 5 helical transmembrane spans lie at 205–225 (WASAGWEWVNIAFLFGGLYLL), 229–249 (VYTWHAPVSMLLALALMAALF), 259–279 (GSPLFHLLTGATMLGAFFIVT), 292–312 (VIYGALIGMLVYVIRTWGSSY), and 315–335 (GVAFAVLLMNFAAPFIDYYTT).

Belongs to the NqrB/RnfD family. In terms of assembly, the complex is composed of six subunits: RnfA, RnfB, RnfC, RnfD, RnfE and RnfG. Requires FMN as cofactor.

Its subcellular location is the cell inner membrane. Its function is as follows. Part of a membrane-bound complex that couples electron transfer with translocation of ions across the membrane. In Cellvibrio japonicus (strain Ueda107) (Pseudomonas fluorescens subsp. cellulosa), this protein is Ion-translocating oxidoreductase complex subunit D.